A 550-amino-acid chain; its full sequence is Homeobox and leucine zipper protein Homez (550 aa).

Pro residues predominate over residues methionine 1 to glycine 10. The segment at methionine 1–serine 36 is disordered. Positions tryptophan 55–tryptophan 114 form a DNA-binding region, homeobox 1. The interval glycine 168 to glutamine 199 is disordered. Residues lysine 182, lysine 200, and lysine 202 each participate in a glycyl lysine isopeptide (Lys-Gly) (interchain with G-Cter in SUMO2) cross-link. A disordered region spans residues leucine 223 to proline 265. Positions proline 237–glutamine 256 are enriched in polar residues. Position 351 is a phosphoserine (serine 351). 2 consecutive DNA-binding regions (homeobox) follow at residues glutamine 355–glutamine 415 and threonine 451–valine 510. The Nuclear localization signal motif lies at arginine 358 to lysine 363. Disordered stretches follow at residues valine 424–proline 465 and cysteine 512–aspartate 550. At threonine 451 the chain carries Phosphothreonine. A compositionally biased stretch (pro residues) spans proline 452 to isoleucine 463. Positions leucine 513–aspartate 550 are enriched in acidic residues.

Homodimer or heterodimer (Potential). Interacts with HOXC8. As to expression, ubiquitous. Strongly expressed in adult testis and kidney as well as fetal lung and kidney.

The protein localises to the nucleus. May function as a transcriptional regulator. The sequence is that of Homeobox and leucine zipper protein Homez (HOMEZ) from Homo sapiens (Human).